Here is a 76-residue protein sequence, read N- to C-terminus: Contulakin-G (76 aa).

The signal sequence occupies residues 1–22; sequence MQTAYWVMVMMMVWIAAPLSEG. The propeptide occupies 23–50; that stretch reads GKLNDVIRGLVPDDITPQLILGSLISRR. Gln51 bears the Pyrrolidone carboxylic acid mark. Residues 51-76 form a disordered region; sequence QSEEGGSNATKKPYILRASDQVASGP. An O-linked (GalNAc...) threonine glycan is attached at Thr60. Positions 67–76 are excised as a propeptide; sequence RASDQVASGP.

Belongs to the conotoxin C superfamily. In terms of processing, O-glycosylated. The glycosylation seems to enhance the affinity to the neurotensin receptors. As to expression, expressed by the venom duct.

The protein resides in the secreted. Functionally, acts as an agonist of neurotensin receptors. It binds to human neurotensin type 1 receptor (NTSR1), rat neurotensin types 1 and 2 receptors (NTSR1/NTSR2) and mouse neurotensin type 3 receptor (SORT1). This is Contulakin-G from Conus geographus (Geography cone).